Consider the following 318-residue polypeptide: Methionyl-tRNA formyltransferase (318 aa).

Residue 112 to 115 (SILP) participates in (6S)-5,6,7,8-tetrahydrofolate binding.

It belongs to the Fmt family.

The enzyme catalyses L-methionyl-tRNA(fMet) + (6R)-10-formyltetrahydrofolate = N-formyl-L-methionyl-tRNA(fMet) + (6S)-5,6,7,8-tetrahydrofolate + H(+). Attaches a formyl group to the free amino group of methionyl-tRNA(fMet). The formyl group appears to play a dual role in the initiator identity of N-formylmethionyl-tRNA by promoting its recognition by IF2 and preventing the misappropriation of this tRNA by the elongation apparatus. This Shewanella oneidensis (strain ATCC 700550 / JCM 31522 / CIP 106686 / LMG 19005 / NCIMB 14063 / MR-1) protein is Methionyl-tRNA formyltransferase.